The sequence spans 343 residues: ELAV-like protein 3 (343 aa).

3 consecutive RRM domains span residues 35–113, 121–202, and 260–338; these read TNLI…YARP, ANLY…FANN, and WCIF…FKTS.

Belongs to the RRM elav family.

Its function is as follows. RNA-binding protein that binds to AU-rich sequences (AREs) of target mRNAs. May also bind poly-A tracts via RRM 3. May be involved in neuronal differentiation and maintenance. In Xenopus tropicalis (Western clawed frog), this protein is ELAV-like protein 3.